The chain runs to 368 residues: Glutamate 5-kinase (368 aa).

Residue K13 coordinates ATP. Substrate contacts are provided by S54, D141, and N153. 173 to 174 (SD) serves as a coordination point for ATP. Residues 278–355 (RGEITVDAGA…AEIEAVLGYP (78 aa)) form the PUA domain.

It belongs to the glutamate 5-kinase family.

It localises to the cytoplasm. It carries out the reaction L-glutamate + ATP = L-glutamyl 5-phosphate + ADP. The protein operates within amino-acid biosynthesis; L-proline biosynthesis; L-glutamate 5-semialdehyde from L-glutamate: step 1/2. Catalyzes the transfer of a phosphate group to glutamate to form L-glutamate 5-phosphate. The polypeptide is Glutamate 5-kinase (Dinoroseobacter shibae (strain DSM 16493 / NCIMB 14021 / DFL 12)).